The chain runs to 183 residues: MRILGIDPGLRVTGFGVIDVSGHRLAYVASGVIRTPTADLATRLGTIFQGVSTLVREHAPDQAAIEQVFVNVNPQSTLLLGQARGAAICGLVSGGLPVAEYTALQLKQAVVGYGRATKSQMQEMVTRLLNLTGQPGSDAADALGMAICHAHSGSTLGTIGAIGGLAPALAKKGLRVRRGRLVG.

Residues D7, E66, and D138 contribute to the active site. 3 residues coordinate Mg(2+): D7, E66, and D138.

This sequence belongs to the RuvC family. Homodimer which binds Holliday junction (HJ) DNA. The HJ becomes 2-fold symmetrical on binding to RuvC with unstacked arms; it has a different conformation from HJ DNA in complex with RuvA. In the full resolvosome a probable DNA-RuvA(4)-RuvB(12)-RuvC(2) complex forms which resolves the HJ. Requires Mg(2+) as cofactor.

The protein resides in the cytoplasm. It carries out the reaction Endonucleolytic cleavage at a junction such as a reciprocal single-stranded crossover between two homologous DNA duplexes (Holliday junction).. Its function is as follows. The RuvA-RuvB-RuvC complex processes Holliday junction (HJ) DNA during genetic recombination and DNA repair. Endonuclease that resolves HJ intermediates. Cleaves cruciform DNA by making single-stranded nicks across the HJ at symmetrical positions within the homologous arms, yielding a 5'-phosphate and a 3'-hydroxyl group; requires a central core of homology in the junction. The consensus cleavage sequence is 5'-(A/T)TT(C/G)-3'. Cleavage occurs on the 3'-side of the TT dinucleotide at the point of strand exchange. HJ branch migration catalyzed by RuvA-RuvB allows RuvC to scan DNA until it finds its consensus sequence, where it cleaves and resolves the cruciform DNA. This chain is Crossover junction endodeoxyribonuclease RuvC, found in Burkholderia ambifaria (strain ATCC BAA-244 / DSM 16087 / CCUG 44356 / LMG 19182 / AMMD) (Burkholderia cepacia (strain AMMD)).